The primary structure comprises 393 residues: 8-amino-7-oxononanoate synthase (393 aa).

Arg18 is a substrate binding site. 105 to 106 (GY) contacts pyridoxal 5'-phosphate. His130 is a substrate binding site. Ser178, His206, and Thr234 together coordinate pyridoxal 5'-phosphate. Lys237 is subject to N6-(pyridoxal phosphate)lysine. Thr353 lines the substrate pocket.

Belongs to the class-II pyridoxal-phosphate-dependent aminotransferase family. BioF subfamily. As to quaternary structure, homodimer. The cofactor is pyridoxal 5'-phosphate.

It carries out the reaction 6-carboxyhexanoyl-[ACP] + L-alanine + H(+) = (8S)-8-amino-7-oxononanoate + holo-[ACP] + CO2. Its pathway is cofactor biosynthesis; biotin biosynthesis. Its function is as follows. Catalyzes the decarboxylative condensation of pimeloyl-[acyl-carrier protein] and L-alanine to produce 8-amino-7-oxononanoate (AON), [acyl-carrier protein], and carbon dioxide. The chain is 8-amino-7-oxononanoate synthase from Geotalea daltonii (strain DSM 22248 / JCM 15807 / FRC-32) (Geobacter daltonii).